Reading from the N-terminus, the 241-residue chain is tRNA pseudouridine synthase B (241 aa).

The active-site Nucleophile is the Asp52.

This sequence belongs to the pseudouridine synthase TruB family. Type 1 subfamily.

It carries out the reaction uridine(55) in tRNA = pseudouridine(55) in tRNA. In terms of biological role, responsible for synthesis of pseudouridine from uracil-55 in the psi GC loop of transfer RNAs. This Chloroherpeton thalassium (strain ATCC 35110 / GB-78) protein is tRNA pseudouridine synthase B.